Here is a 282-residue protein sequence, read N- to C-terminus: 4-diphosphocytidyl-2-C-methyl-D-erythritol kinase (282 aa).

Lys-9 is an active-site residue. Residue 98–108 (PMGGGLGGGSS) participates in ATP binding. Asp-140 is an active-site residue.

This sequence belongs to the GHMP kinase family. IspE subfamily. In terms of assembly, homodimer.

The catalysed reaction is 4-CDP-2-C-methyl-D-erythritol + ATP = 4-CDP-2-C-methyl-D-erythritol 2-phosphate + ADP + H(+). The protein operates within isoprenoid biosynthesis; isopentenyl diphosphate biosynthesis via DXP pathway; isopentenyl diphosphate from 1-deoxy-D-xylulose 5-phosphate: step 3/6. In terms of biological role, catalyzes the phosphorylation of the position 2 hydroxy group of 4-diphosphocytidyl-2C-methyl-D-erythritol. This Salmonella paratyphi A (strain ATCC 9150 / SARB42) protein is 4-diphosphocytidyl-2-C-methyl-D-erythritol kinase.